The sequence spans 79 residues: Dolichyl-diphosphooligosaccharide--protein glycosyltransferase subunit TMEM258 (79 aa).

2 helical membrane-spanning segments follow: residues 17 to 37 (VFPH…AWFF) and 55 to 75 (LISL…LLWV).

This sequence belongs to the OST5 family. In terms of assembly, component of the oligosaccharyltransferase (OST) complex.

It is found in the membrane. The protein localises to the endoplasmic reticulum. Its subcellular location is the cytoplasm. Its pathway is protein modification; protein glycosylation. In terms of biological role, subunit of the oligosaccharyl transferase (OST) complex that catalyzes the initial transfer of a defined glycan (Glc(3)Man(9)GlcNAc(2) in eukaryotes) from the lipid carrier dolichol-pyrophosphate to an asparagine residue within an Asn-X-Ser/Thr consensus motif in nascent polypeptide chains, the first step in protein N-glycosylation. N-glycosylation occurs cotranslationally and the complex associates with the Sec61 complex at the channel-forming translocon complex that mediates protein translocation across the endoplasmic reticulum (ER). All subunits are required for a maximal enzyme activity. This is Dolichyl-diphosphooligosaccharide--protein glycosyltransferase subunit TMEM258 from Gallus gallus (Chicken).